The primary structure comprises 324 residues: Antihemorrhagic factor jMSF (324 aa).

The signal sequence occupies residues 1-19; that stretch reads MHFLVALVLLGQIIGSTLS. Cystatin fetuin-A-type domains are found at residues 22-130 and 141-254; these read VRGD…VKCH and RNCP…SDCV. Positions 23-25 match the Cell attachment site motif; the sequence is RGD. 7 disulfides stabilise this stretch: C28-C315, C85-C96, C110-C129, C143-C146, C205-C217, C230-C253, and C287-C291. A glycan (N-linked (GlcNAc...) asparagine) is linked at N204. N282 is a glycosylation site (N-linked (GlcNAc...) asparagine).

In terms of assembly, homodimer. Expressed by the liver.

The protein resides in the secreted. Its function is as follows. Suppress hemorrhage induced by metalloproteinases from the same venom (brevilysin-H3, -H4, -H6) and from habu venom (weak inhibition of the metalloproteinases HR2A). The non-hemorrhagic brevilysin-H2 is strongly inhibited by jMSF, whereas the brevilysin-L6 is not inhibited. Does not inhibit serine and cysteine proteases such as trypsin, chymotrypsin, thermolysin, and papain. The inhibition may occur by formation of a non-covalent complex between this protein and the proteinases at their metalloproteinase domains. The sequence is that of Antihemorrhagic factor jMSF from Gloydius blomhoffii (Mamushi).